The sequence spans 29 residues: uncharacterized protein (29 aa).

It localises to the plastid. The protein resides in the chloroplast. This is an uncharacterized protein from Trieres chinensis (Marine centric diatom).